A 302-amino-acid polypeptide reads, in one-letter code: Sulfate adenylyltransferase subunit 2 (302 aa).

This sequence belongs to the PAPS reductase family. CysD subfamily. In terms of assembly, heterodimer composed of CysD, the smaller subunit, and CysN.

It carries out the reaction sulfate + ATP + H(+) = adenosine 5'-phosphosulfate + diphosphate. The protein operates within sulfur metabolism; hydrogen sulfide biosynthesis; sulfite from sulfate: step 1/3. Its function is as follows. With CysN forms the ATP sulfurylase (ATPS) that catalyzes the adenylation of sulfate producing adenosine 5'-phosphosulfate (APS) and diphosphate, the first enzymatic step in sulfur assimilation pathway. APS synthesis involves the formation of a high-energy phosphoric-sulfuric acid anhydride bond driven by GTP hydrolysis by CysN coupled to ATP hydrolysis by CysD. This chain is Sulfate adenylyltransferase subunit 2, found in Psychromonas ingrahamii (strain DSM 17664 / CCUG 51855 / 37).